We begin with the raw amino-acid sequence, 249 residues long: Cyclin-dependent kinase inhibitor 2 (249 aa).

The segment at 118–180 (KVCTQAGEDH…MCRRSSTTSA (63 aa)) is disordered. The segment covering 161–180 (AESNQEAKQQMCRRSSTTSA) has biased composition (polar residues).

The protein belongs to the CDI family. ICK/KRP subfamily.

The sequence is that of Cyclin-dependent kinase inhibitor 2 (KRP2) from Oryza sativa subsp. japonica (Rice).